A 232-amino-acid chain; its full sequence is Membrane steroid-binding protein 1 (232 aa).

The chain crosses the membrane as a helical span at residues 25-45; the sequence is AAFFTAVAAAAALYHVVSGIF. 2 disordered regions span residues 48–77 and 172–232; these read PPPP…VSEE and TVPV…AKES. Residues 71–170 form the Cytochrome b5 heme-binding domain; sequence LGEVSEEELR…GKYVKVGTVK (100 aa). The steroid-binding stretch occupies residues 73 to 170; that stretch reads EVSEEELRQY…GKYVKVGTVK (98 aa). Residues 179-193 show a composition bias toward low complexity; that stretch reads APSTSPETTETAAAA. Residues 194-219 show a composition bias toward basic and acidic residues; it reads EPEKAPATEEKPREVSSEEVKEKEDA.

It belongs to the cytochrome b5 family. MAPR subfamily. As to quaternary structure, interacts with SERL2. In terms of tissue distribution, expressed in leaf sheaths, leaf blades and panicles.

The protein localises to the cell membrane. Functionally, binds multiple steroid compounds. May act as a coreceptor with SERL2 and enhance its endocytosis. The polypeptide is Membrane steroid-binding protein 1 (Oryza sativa subsp. japonica (Rice)).